The chain runs to 134 residues: Profilin-4 (134 aa).

Cys-13 and Cys-118 are joined by a disulfide. Residues 84-100 (AVIRGKKGSGGITIKKT) carry the Involved in PIP2 interaction motif. The residue at position 114 (Thr-114) is a Phosphothreonine.

It belongs to the profilin family. In terms of assembly, occurs in many kinds of cells as a complex with monomeric actin in a 1:1 ratio. In terms of processing, phosphorylated by MAP kinases.

It is found in the cytoplasm. Its subcellular location is the cytoskeleton. Binds to actin and affects the structure of the cytoskeleton. At high concentrations, profilin prevents the polymerization of actin, whereas it enhances it at low concentrations. The protein is Profilin-4 of Olea europaea (Common olive).